Reading from the N-terminus, the 163-residue chain is Nucleotide-binding protein KPN78578_03700 (163 aa).

It belongs to the YajQ family.

Nucleotide-binding protein. The chain is Nucleotide-binding protein KPN78578_03700 from Klebsiella pneumoniae subsp. pneumoniae (strain ATCC 700721 / MGH 78578).